Consider the following 475-residue polypeptide: tRNA-2-methylthio-N(6)-dimethylallyladenosine synthase (475 aa).

Basic and acidic residues predominate over residues 1-10 (MQETTVKRDG). The segment at 1 to 22 (MQETTVKRDGASPSDAGTPATT) is disordered. The MTTase N-terminal domain maps to 27–144 (GKLYIRTFGC…LPDLIKRRRA (118 aa)). [4Fe-4S] cluster is bound by residues cysteine 36, cysteine 73, cysteine 107, cysteine 181, cysteine 185, and cysteine 188. The 234-residue stretch at 167–400 (RVDGATAFVS…QALINQQAAA (234 aa)) folds into the Radical SAM core domain. Positions 403 to 466 (QGMIGTRQRV…TNSLRGRVAG (64 aa)) constitute a TRAM domain.

Belongs to the methylthiotransferase family. MiaB subfamily. As to quaternary structure, monomer. It depends on [4Fe-4S] cluster as a cofactor.

It is found in the cytoplasm. The enzyme catalyses N(6)-dimethylallyladenosine(37) in tRNA + (sulfur carrier)-SH + AH2 + 2 S-adenosyl-L-methionine = 2-methylsulfanyl-N(6)-dimethylallyladenosine(37) in tRNA + (sulfur carrier)-H + 5'-deoxyadenosine + L-methionine + A + S-adenosyl-L-homocysteine + 2 H(+). Its function is as follows. Catalyzes the methylthiolation of N6-(dimethylallyl)adenosine (i(6)A), leading to the formation of 2-methylthio-N6-(dimethylallyl)adenosine (ms(2)i(6)A) at position 37 in tRNAs that read codons beginning with uridine. The chain is tRNA-2-methylthio-N(6)-dimethylallyladenosine synthase from Bordetella parapertussis (strain 12822 / ATCC BAA-587 / NCTC 13253).